A 498-amino-acid chain; its full sequence is ATP synthase subunit beta, chloroplastic (498 aa).

172 to 179 contributes to the ATP binding site; sequence GGAGVGKT.

Belongs to the ATPase alpha/beta chains family. In terms of assembly, F-type ATPases have 2 components, CF(1) - the catalytic core - and CF(0) - the membrane proton channel. CF(1) has five subunits: alpha(3), beta(3), gamma(1), delta(1), epsilon(1). CF(0) has four main subunits: a(1), b(1), b'(1) and c(9-12).

Its subcellular location is the plastid. It localises to the chloroplast thylakoid membrane. It carries out the reaction ATP + H2O + 4 H(+)(in) = ADP + phosphate + 5 H(+)(out). Produces ATP from ADP in the presence of a proton gradient across the membrane. The catalytic sites are hosted primarily by the beta subunits. The chain is ATP synthase subunit beta, chloroplastic from Beta vulgaris (Sugar beet).